Reading from the N-terminus, the 154-residue chain is Ribonuclease H (154 aa).

The RNase H type-1 domain maps to 1-142 (MKQVDIFTDG…CDTIARGHAS (142 aa)). The Mg(2+) site is built by aspartate 9, glutamate 47, aspartate 69, and aspartate 134.

The protein belongs to the RNase H family. In terms of assembly, monomer. The cofactor is Mg(2+).

Its subcellular location is the cytoplasm. The enzyme catalyses Endonucleolytic cleavage to 5'-phosphomonoester.. In terms of biological role, endonuclease that specifically degrades the RNA of RNA-DNA hybrids. The protein is Ribonuclease H of Oleidesulfovibrio alaskensis (strain ATCC BAA-1058 / DSM 17464 / G20) (Desulfovibrio alaskensis).